Consider the following 124-residue polypeptide: Small ribosomal subunit protein bS6 (124 aa).

Positions 96 to 124 (ETGPSPMMKEVQREEAKKSAATQPSEAQA) are disordered. Positions 115–124 (AATQPSEAQA) are enriched in polar residues.

The protein belongs to the bacterial ribosomal protein bS6 family.

Binds together with bS18 to 16S ribosomal RNA. The sequence is that of Small ribosomal subunit protein bS6 from Paraburkholderia phytofirmans (strain DSM 17436 / LMG 22146 / PsJN) (Burkholderia phytofirmans).